The sequence spans 890 residues: Alanine--tRNA ligase (890 aa).

4 residues coordinate Zn(2+): His-572, His-576, Cys-674, and His-678.

It belongs to the class-II aminoacyl-tRNA synthetase family. The cofactor is Zn(2+).

Its subcellular location is the cytoplasm. The catalysed reaction is tRNA(Ala) + L-alanine + ATP = L-alanyl-tRNA(Ala) + AMP + diphosphate. Catalyzes the attachment of alanine to tRNA(Ala) in a two-step reaction: alanine is first activated by ATP to form Ala-AMP and then transferred to the acceptor end of tRNA(Ala). Also edits incorrectly charged Ser-tRNA(Ala) and Gly-tRNA(Ala) via its editing domain. The sequence is that of Alanine--tRNA ligase from Saccharopolyspora erythraea (strain ATCC 11635 / DSM 40517 / JCM 4748 / NBRC 13426 / NCIMB 8594 / NRRL 2338).